Reading from the N-terminus, the 304-residue chain is N-acetyl-D-glucosamine kinase (304 aa).

Residues 4-11 (GFDMGGTK) and 133-140 (GVGGGLIV) contribute to the ATP site. Residues His-157, Cys-177, Cys-179, and Cys-184 each contribute to the Zn(2+) site.

This sequence belongs to the ROK (NagC/XylR) family. NagK subfamily.

It catalyses the reaction N-acetyl-D-glucosamine + ATP = N-acetyl-D-glucosamine 6-phosphate + ADP + H(+). The protein operates within cell wall biogenesis; peptidoglycan recycling. Catalyzes the phosphorylation of N-acetyl-D-glucosamine (GlcNAc) derived from cell-wall degradation, yielding GlcNAc-6-P. The protein is N-acetyl-D-glucosamine kinase of Yersinia pseudotuberculosis serotype O:3 (strain YPIII).